The sequence spans 421 residues: UDP-N-acetylglucosamine 1-carboxyvinyltransferase 1 (421 aa).

22-23 (KN) contributes to the phosphoenolpyruvate binding site. Arg95 contributes to the UDP-N-acetyl-alpha-D-glucosamine binding site. Catalysis depends on Cys119, which acts as the Proton donor. Residue Cys119 is modified to 2-(S-cysteinyl)pyruvic acid O-phosphothioketal. UDP-N-acetyl-alpha-D-glucosamine contacts are provided by residues 124 to 128 (RPIEQ), Asp308, and Val330.

Belongs to the EPSP synthase family. MurA subfamily.

It localises to the cytoplasm. It catalyses the reaction phosphoenolpyruvate + UDP-N-acetyl-alpha-D-glucosamine = UDP-N-acetyl-3-O-(1-carboxyvinyl)-alpha-D-glucosamine + phosphate. The protein operates within cell wall biogenesis; peptidoglycan biosynthesis. In terms of biological role, cell wall formation. Adds enolpyruvyl to UDP-N-acetylglucosamine. The polypeptide is UDP-N-acetylglucosamine 1-carboxyvinyltransferase 1 (Staphylococcus aureus (strain MRSA252)).